A 598-amino-acid chain; its full sequence is Elongation factor 4 (598 aa).

Residues 2–184 (DNVRNFAIIA…AIITKLPAPQ (183 aa)) enclose the tr-type G domain. GTP-binding positions include 14–19 (DHGKST) and 131–134 (NKVD).

It belongs to the TRAFAC class translation factor GTPase superfamily. Classic translation factor GTPase family. LepA subfamily.

The protein resides in the cell membrane. It carries out the reaction GTP + H2O = GDP + phosphate + H(+). Functionally, required for accurate and efficient protein synthesis under certain stress conditions. May act as a fidelity factor of the translation reaction, by catalyzing a one-codon backward translocation of tRNAs on improperly translocated ribosomes. Back-translocation proceeds from a post-translocation (POST) complex to a pre-translocation (PRE) complex, thus giving elongation factor G a second chance to translocate the tRNAs correctly. Binds to ribosomes in a GTP-dependent manner. The chain is Elongation factor 4 from Wolbachia sp. subsp. Brugia malayi (strain TRS).